The primary structure comprises 90 residues: Small ribosomal subunit protein bS16 (90 aa).

It belongs to the bacterial ribosomal protein bS16 family.

This Lactobacillus helveticus (strain DPC 4571) protein is Small ribosomal subunit protein bS16.